A 237-amino-acid polypeptide reads, in one-letter code: Corrinoid adenosyltransferase MMAB (237 aa).

Residues 1-26 (MAVWLFGGRLGLRGRLSACRLLCPRF) constitute a mitochondrion transit peptide. Residues 30–49 (GPQGGEDGDRLQPSSTAAKI) form a disordered region. ATP-binding positions include 54-57 (TKTG), 62-63 (SS), and K72. S128 is modified (phosphoserine). Residue 184–188 (RRAER) coordinates ATP. Position 205 is an N6-succinyllysine (K205). Residue N208 participates in ATP binding. At K224 the chain carries N6-acetyllysine; alternate. The residue at position 224 (K224) is an N6-succinyllysine; alternate.

It belongs to the Cob(I)alamin adenosyltransferase family. As to quaternary structure, homotrimer.

The protein resides in the mitochondrion. The catalysed reaction is cob(I)alamin-[corrinoid adenosyltransferase] + ATP = apo-[corrinoid adenosyltransferase] + adenosylcob(III)alamin + triphosphate. In terms of biological role, converts cob(I)alamin to adenosylcobalamin (adenosylcob(III)alamin), a coenzyme for methylmalonyl-CoA mutase, therefore participates in the final step of the vitamin B12 conversion. Generates adenosylcobalamin (AdoCbl) and directly delivers the cofactor to MUT in a transfer that is stimulated by ATP-binding to MMAB and gated by MMAA. This Mus musculus (Mouse) protein is Corrinoid adenosyltransferase MMAB.